The primary structure comprises 274 residues: NADPH-dependent 7-cyano-7-deazaguanine reductase (274 aa).

80–82 (VES) is a substrate binding site. NADPH is bound at residue 82 to 83 (SK). Cys181 (thioimide intermediate) is an active-site residue. Asp188 (proton donor) is an active-site residue. A substrate-binding site is contributed by 220 to 221 (HE). 249–250 (RG) contributes to the NADPH binding site.

It belongs to the GTP cyclohydrolase I family. QueF type 2 subfamily. Homodimer.

The protein resides in the cytoplasm. It catalyses the reaction 7-aminomethyl-7-carbaguanine + 2 NADP(+) = 7-cyano-7-deazaguanine + 2 NADPH + 3 H(+). The protein operates within tRNA modification; tRNA-queuosine biosynthesis. Its function is as follows. Catalyzes the NADPH-dependent reduction of 7-cyano-7-deazaguanine (preQ0) to 7-aminomethyl-7-deazaguanine (preQ1). This Paraburkholderia xenovorans (strain LB400) protein is NADPH-dependent 7-cyano-7-deazaguanine reductase.